Reading from the N-terminus, the 147-residue chain is Ribosomal RNA large subunit methyltransferase H (147 aa).

Residues Leu66, Gly95, and 114–119 each bind S-adenosyl-L-methionine; that span reads LSELTF.

It belongs to the RNA methyltransferase RlmH family. As to quaternary structure, homodimer.

The protein resides in the cytoplasm. It carries out the reaction pseudouridine(1915) in 23S rRNA + S-adenosyl-L-methionine = N(3)-methylpseudouridine(1915) in 23S rRNA + S-adenosyl-L-homocysteine + H(+). Specifically methylates the pseudouridine at position 1915 (m3Psi1915) in 23S rRNA. The protein is Ribosomal RNA large subunit methyltransferase H of Synechococcus sp. (strain RCC307).